Reading from the N-terminus, the 1133-residue chain is MKARAPPPPGKPAAQNVHSEQKLPHDATLGSQQSLVHLKEALHNSTLDITVVLPSGLEKQSVVSGSRAVMDLLVELCLQNHLNPSHHVLEIWSSETQQPLSFKPNTLIGSLNAHTVFLKEKVPEEKGKPGLTKAPEKSVRLVVNYLRTQKAVMRVSPEVPLQNILPVICAKCEVSPDHVVLLRDNIAGEELELSKSLNELGIKELYAWDNRREMLRKSSLGNDETDKEKKKFLGFFKVNKRSNSKAEHLGLSGADSDEDPSKSASGGDLNGCVTTPNSPSLHSRSLTLGPSLSLGNISGMSMKSDMKKRRAPPPPSPGLLGQDKVSEKASLSSQADLQKKKRRAPAPPPPQPPPPSPVVPNRKEDKEENRKSTVGMEENYETDTSSLTSSVNGVSNHSLQEAIIPDSGVDDIPVTFIGEVSDEPFDSGLFFSGSNNAAALNQGGIASQRSHLPPYQTEQSQPFIRTNRKEPDPSLPSQDYRKRNQPILANTSENENPVGIDPRVTSFVSKPSTDDPKAKDKDKMCGSGPSEKTQTGHRVNSLPVNPRVGEDENSNSALPPWSHHGQASGGSYGLKYGLTTYKIVPPKPEMRCYDRDVSLSTGAIKIDELGNLMSPHMNGSRTISKPSAVAETEAPPIGKVKEFWRRNSMEKYLNGPAECTVKKAPSTTITATSEKPQRDETKAGFTLTTPEQQPASQEYGAPPEEDRSRPHSAVSCPVKVPAPNPTDITFLKPQRRTSSQYVASAIAKKMGPPKVHADVVRPHKKTAEQGHEEAKLARPPPAWKDSAVPNLCSEAGQCEHGTNQGSVRLPSNPGGQLPADHPKVEVNSTYGKSATHNSPAAVHRNSYFLPGRSSQRDRVSVGQSCGFHEKQTISNQKMNSTSNPSQALDKAHPAPLLLTEARDSGRILVNGSAQTPGNCEPPHSQKESTLTSYIILQTEEKPSPLSADGQNSDDALPSSIFGPKKKFKPVVQRPLPKDISLHSALMEAIHTSGGRDKLRKTAEQASEGRPKKPSYVEAESERSALLAAIRGHSGTLSLRKVSSLASEELQSFRDAALMAPGVDKPQQEDRGLPPPPALPPPSTPASQVPSASIPVSRFSIGTLSNPVNARQALMDAIRSGTGAARLRKVPLLV.

The segment covering 1 to 11 has biased composition (pro residues); it reads MKARAPPPPGK. Positions 1 to 25 are disordered; sequence MKARAPPPPGKPAAQNVHSEQKLPH. Ser31, Ser34, Ser196, Ser219, Ser256, and Ser278 each carry phosphoserine. Disordered regions lie at residues 246-393 and 442-568; these read AEHL…SVNG and QGGI…GQAS. Positions 272-301 are enriched in polar residues; the sequence is CVTTPNSPSLHSRSLTLGPSLSLGNISGMS. The KKRRAP 1 motif lies at 307-312; sequence KKRRAP. Ser330 and Ser333 each carry phosphoserine. A KKRRAP 2 motif is present at residues 340–345; the sequence is KKRRAP. The span at 345–358 shows a compositional bias: pro residues; sequence PAPPPPQPPPPSPV. Phosphoserine is present on Ser356. Positions 361–371 are enriched in basic and acidic residues; the sequence is NRKEDKEENRK. Polar residues-rich tracts occupy residues 382-393 and 442-464; these read TDTSSLTSSVNG and QGGI…QPFI. Ser447 carries the phosphoserine modification. The span at 512-524 shows a compositional bias: basic and acidic residues; the sequence is STDDPKAKDKDKM. Ser614 bears the Phosphoserine mark. The interval 664-720 is disordered; it reads APSTTITATSEKPQRDETKAGFTLTTPEQQPASQEYGAPPEEDRSRPHSAVSCPVKV. Polar residues-rich tracts occupy residues 665–674 and 686–696; these read PSTTITATSE and TLTTPEQQPAS. The residue at position 924 (Ser924) is a Phosphoserine. 2 disordered regions span residues 942-961 and 990-1018; these read PSPL…SSIF and HTSG…YVEA. WH2 domains lie at 981 to 1001 and 1021 to 1041; these read LHSA…LRKT and ERSA…LRKV. The segment covering 993 to 1010 has biased composition (basic and acidic residues); the sequence is GGRDKLRKTAEQASEGRP. The disordered stretch occupies residues 1063–1091; sequence DKPQQEDRGLPPPPALPPPSTPASQVPSA. Residues 1072-1083 are compositionally biased toward pro residues; the sequence is LPPPPALPPPST. Ser1099 bears the Phosphoserine mark. Positions 1109–1129 constitute a WH2 3 domain; that stretch reads ARQALMDAIRSGTGAARLRKV.

Identified in a complex composed of ACTA1, COBL, GSN AND TMSB4X. Identified in a complex composed of COBL, PACSIN1 and WASL. Interacts with PACSIN1, PACSIN2 and PACSIN3. Interacts (via WH2 domains) with actin monomers. Interacts with both PACSIN1 and DBNL. In terms of tissue distribution, detected in brain (at protein level).

The protein resides in the cell membrane. Its subcellular location is the cytoplasm. The protein localises to the cytoskeleton. It is found in the cell projection. It localises to the ruffle. The protein resides in the cytosol. In terms of biological role, plays an important role in the reorganization of the actin cytoskeleton. Binds to and sequesters actin monomers (G actin). Nucleates actin polymerization by assembling three actin monomers in cross-filament orientation and thereby promotes growth of actin filaments at the barbed end. Can also mediate actin depolymerization at barbed ends and severing of actin filaments. Promotes formation of cell ruffles. Regulates dendrite branching in Purkinje cells. Regulates neuron morphogenesis and increases branching of axons and dendrites. The chain is Protein cordon-bleu (Cobl) from Rattus norvegicus (Rat).